A 238-amino-acid chain; its full sequence is UPF0758 protein Dtpsy_2777 (238 aa).

One can recognise an MPN domain in the interval 116–238; that stretch reads VFDSPQAVQH…ALSMAEQGLV (123 aa). Zn(2+) is bound by residues His187, His189, and Asp200. The short motif at 187 to 200 is the JAMM motif element; sequence HNHPSGSVQPSRAD.

This sequence belongs to the UPF0758 family.

The chain is UPF0758 protein Dtpsy_2777 from Acidovorax ebreus (strain TPSY) (Diaphorobacter sp. (strain TPSY)).